Reading from the N-terminus, the 923-residue chain is MSQFKRQRINPLPGGRNFSGTASTSLLGPPPGLLTPPVATELSQNARHLQGGEKQRVFTGIVTSLHDYFGVVDEEVFFQLSVVKGRLPQLGEKVLVKAAYNPGQAVPWNAVKVQTLSNQPLLKSPAPPLLHVAALGQKQGILGAQPQLIFQPHRIPPLFPQKPLSLFQTSHTLHLSHLNRFPARGPHGRLDQGRSDDYDSKKRKQRAGGEPWGAKKPRHDLPPYRVHLTPYTVDSPICDFLELQRRYRSLLVPSDFLSVHLSWLSAFPLSQPFSLHHPSRIQVSSEKEAAPDAGAEPITADSDPAYSSKVLLLSSPGLEELYRCCMLFVDDMAEPRETPEHPLKQIKFLLGRKEEEAVLVGGEWSPSLDGLDPQADPQVLVRTAIRCAQAQTGIDLSGCTKWWRFAEFQYLQPGPPRRLQTVVVYLPDVWTIMPTLEEWEALCQQKAAEAAPPTQEAQGETEPTEQAPDALEQAADTSRRNAETPEATTQQETDTDLPEAPPPPLEPAVIARPGCVNLSLHGIVEDRRPKERISFEVMVLAELFLEMLQRDFGYRVYKMLLSLPEKVVSPPEPEKEEAAKEEATKEEEAIKEEVVKEPKDEAQNEGPATESEAPLKEDGLLPKPLSSGGEEEEKPRGEASEDLCEMALDPELLLLRDDGEEEFAGAKLEDSEVRSVASNQSEMEFSSLQDMPKELDPSAVLPLDCLLAFVFFDANWCGYLHRRDLERILLTLGIRLSAEQAKQLVSRVVTQNICQYRSLQYSRQEGLDGGLPEEVLFGNLDLLPPPGKSTKPGAAPTEHKALVSHNGSLINVGSLLQRAEQQDSGRLYLENKIHTLELKLEESHNRFSATEVTNKTLAAEMQELRVRLAEAEETARTAERQKSQLQRLLQELRRRLTPLQLEIQRVVEKADSWVEKEEPAPSN.

Residues 1-35 (MSQFKRQRINPLPGGRNFSGTASTSLLGPPPGLLT) form a disordered region. T35 is modified (phosphothreonine). K112 bears the N6-acetyllysine; by KAT8 mark. K123 bears the N6-methyllysine mark. S124 bears the Phosphoserine mark. 3 disordered regions span residues 178–218 (LNRF…KKPR), 446–510 (KAAE…PAVI), and 568–643 (VSPP…SEDL). An Omega-N-methylarginine modification is found at R180. Residues 188–200 (GRLDQGRSDDYDS) are compositionally biased toward basic and acidic residues. Position 215 is an N6-acetyllysine; by KAT8 (K215). Residues 446 to 458 (KAAEAAPPTQEAQ) show a composition bias toward low complexity. A Phosphothreonine; by ATM, ATR and CK2 modification is found at T454. Residue T484 is modified to Phosphothreonine. A Phosphoserine modification is found at S569. Over residues 572–602 (EPEKEEAAKEEATKEEEAIKEEVVKEPKDEA) the composition is skewed to basic and acidic residues. K591 is covalently cross-linked (Glycyl lysine isopeptide (Lys-Gly) (interchain with G-Cter in SUMO2 and SUMO3); alternate). K591 is covalently cross-linked (Glycyl lysine isopeptide (Lys-Gly) (interchain with G-Cter in SUMO2); alternate). Positions 610–670 (ESEAPLKEDG…EEFAGAKLED (61 aa)) are interaction with MCC. S627, S675, S678, S681, S687, and S808 each carry phosphoserine. The tract at residues 704–923 (DCLLAFVFFD…VEKEEPAPSN (220 aa)) is interaction with NR1D1. A coiled-coil region spans residues 829-909 (LENKIHTLEL…QLEIQRVVEK (81 aa)). T897 bears the Phosphothreonine mark.

As to quaternary structure, component of the DBIRD complex. Interacts with ZNF326/ZIRD; the interaction is direct. Interacts (via N-terminus) with SIRT1, which inhibits the deacetylation of substrates. Interacts (via N-terminus) with SUV39H1; this interaction abolishes the interaction with SIRT1. Component of a nuclear receptor-mediated transcription complex composed of at least ZNF335, CCAR2 and EMSY; the complex stimulates the transcription of nuclear receptor target genes such as SOX9 and HOXA1. Within the complex interacts with EMSY and interacts with ZNF335 (via C-terminus). Components of this complex may associate with components of a histone methylation complex to form a complex at least composed of ZNF335, HCFC1, CCAR2, EMSY, MKI67, RBBP5, ASH2L and WDR5. Within this complex, interacts with ASH2L. Interacts with NR1D1. Interacts (via N-terminus) with ESR1 and ESR2. Interacts (via N-terminus) with HDAC3 (via C-terminus). Interacts with HDAC1 and MED2F. Interacts with MCC. Interacts (via N-terminus) with NR1H2 and NR1H3 in a ligand-independent manner. Interacts with CSNK2A1. Interacts (via N-terminus) with p53/TP53. Interacts (via N-terminus) with BRCA1 (via the BRCT domains). Interacts (via N-terminus) with CHEK2 (via protein kinase domain). Interacts with PSEM3. Interacts (via N-terminus) with PSIA3 and SENP1. The sumoylated form shows a preferential interaction with SIRT1 as compared to its unmodified form. Interacts with CECR2; may form part of the CERF-1 and/or CEF-5 ISWI chromatin remodeling complexes in embryonic stem cells. ATM/ATR-mediated phosphorylation at Thr-454 upon DNA damage promotes binding to SIRT1. Phosphorylation at Thr-454 promotes its sumoylation by switching the binding partner of CCAR2 from SENP1 to PIAS3. In terms of processing, acetylation at Lys-112 and Lys-215 by KAT8 prevents inhibitory binding to SIRT1 and increases its deacetylase activity. Post-translationally, genotoxic stress induces its sumoylation and sumoylation promotes the SIRT1-CCAR2 interaction which in turn inhibits SIRT1-mediated deacetylation of p53/TP53. Sumoylation leads to transcriptional activation of p53/TP53 by sequestering SIRT1 from p53/TP53. Desumoylated by SENP1. As to expression, expressed in gastric carcinoma tissue and the expression gradually increases with the progression of the carcinoma (at protein level). Expressed ubiquitously in normal tissues. Expressed in 84 to 100% of neoplastic breast, lung, and colon tissues.

It localises to the nucleus. It is found in the cytoplasm. The protein localises to the cytoskeleton. Its subcellular location is the spindle. Its function is as follows. Core component of the DBIRD complex, a multiprotein complex that acts at the interface between core mRNP particles and RNA polymerase II (RNAPII) and integrates transcript elongation with the regulation of alternative splicing: the DBIRD complex affects local transcript elongation rates and alternative splicing of a large set of exons embedded in (A + T)-rich DNA regions. Inhibits SIRT1 deacetylase activity leading to increasing levels of p53/TP53 acetylation and p53-mediated apoptosis. Inhibits SUV39H1 methyltransferase activity. Mediates ligand-dependent transcriptional activation by nuclear hormone receptors. Plays a critical role in maintaining genomic stability and cellular integrity following UV-induced genotoxic stress. Regulates the circadian expression of the core clock components NR1D1 and BMAL1. Enhances the transcriptional repressor activity of NR1D1 through stabilization of NR1D1 protein levels by preventing its ubiquitination and subsequent degradation. Represses the ligand-dependent transcriptional activation function of ESR2. Acts as a regulator of PCK1 expression and gluconeogenesis by a mechanism that involves, at least in part, both NR1D1 and SIRT1. Negatively regulates the deacetylase activity of HDAC3 and can alter its subcellular localization. Positively regulates the beta-catenin pathway (canonical Wnt signaling pathway) and is required for MCC-mediated repression of the beta-catenin pathway. Represses ligand-dependent transcriptional activation function of NR1H2 and NR1H3 and inhibits the interaction of SIRT1 with NR1H3. Plays an important role in tumor suppression through p53/TP53 regulation; stabilizes p53/TP53 by affecting its interaction with ubiquitin ligase MDM2. Represses the transcriptional activator activity of BRCA1. Inhibits SIRT1 in a CHEK2 and PSEM3-dependent manner and inhibits the activity of CHEK2 in vitro. This is Cell cycle and apoptosis regulator protein 2 (CCAR2) from Homo sapiens (Human).